A 526-amino-acid polypeptide reads, in one-letter code: Type 2 glycosyltransferase (526 aa).

Residues P25–F45 form a helical membrane-spanning segment. Residues N298 and N317 are each glycosylated (N-linked (GlcNAc...) asparagine). Transmembrane regions (helical) follow at residues F340–W360, W375–I395, and F403–I423. Residues N426 and N517 are each glycosylated (N-linked (GlcNAc...) asparagine).

This sequence belongs to the GT2 glycosyltransferase family.

It localises to the cell membrane. It is found in the secreted. The protein localises to the cell wall. Its function is as follows. Glycosyltransferase involved in the maintenance of the outermost surface of the fungal cell wall. Likely functions in the synthesis of a currently unknown, potentially minor but widespread, extracellular or outer cell wall polysaccharide which plays a key role in facilitating many interactions between plants and fungi by enabling hyphal growth on solid matrices. This Gibberella zeae (strain ATCC MYA-4620 / CBS 123657 / FGSC 9075 / NRRL 31084 / PH-1) (Wheat head blight fungus) protein is Type 2 glycosyltransferase.